Consider the following 165-residue polypeptide: Large ribosomal subunit protein uL10 (165 aa).

The protein belongs to the universal ribosomal protein uL10 family. Part of the ribosomal stalk of the 50S ribosomal subunit. The N-terminus interacts with L11 and the large rRNA to form the base of the stalk. The C-terminus forms an elongated spine to which L12 dimers bind in a sequential fashion forming a multimeric L10(L12)X complex.

Its function is as follows. Forms part of the ribosomal stalk, playing a central role in the interaction of the ribosome with GTP-bound translation factors. In Hamiltonella defensa subsp. Acyrthosiphon pisum (strain 5AT), this protein is Large ribosomal subunit protein uL10.